Reading from the N-terminus, the 412-residue chain is Probable inactive allantoicase (412 aa).

The protein belongs to the allantoicase family.

Its function is as follows. The function of this enzyme is unclear as allantoicase activity is not known to exist in mammals. In Bos taurus (Bovine), this protein is Probable inactive allantoicase (ALLC).